Here is a 76-residue protein sequence, read N- to C-terminus: MRTVSIFKNGNNRAIRLPRDLDFEGVSELEIVREGDSIILRPVRPTWGSFAQLEKADPDFMAEREDVVSDEGRFEL.

A SpoVT-AbrB domain is found at 4-45 (VSIFKNGNNRAIRLPRDLDFEGVSELEIVREGDSIILRPVRP).

It belongs to the VapB family.

The chain is Virulence-associated protein VagC (vagC) from Salmonella dublin.